The sequence spans 394 residues: MKWMVVVLLCLPLLEATQIKVPLKKIKSIREVLREKGLLGDFLKNHKPQHARKFFRNRLAKTGDFSVLYEPMSYMDAAYFGQISLGTPPQSFQVLFDTGSSNLWVPSVYCSSLACTTHTRFNPRDSSTYVATDQSFSLEYGTGSLTGVFGYDTMTIQDIQVPKQEFGLSETEPGSDFVYAEFDGILGLGYPGLSEGGATTAMQGLLREGALSQSLFSVYLGSQQGSDEGQLILGGVDESLYTGDIYWTPVTQELYWQIGIEGFLIDGSASGWCSRGCQGIVDTGTSLLTVPSDYLSTLVQAIGAEENEYGEYFVSCSSIQDLPTLTFVISGVEFPLSPSAYILSGENYCMVGLESTYVSPGGGEPVWILGDVFLRSYYSVYDLANNRVGFATAA.

The N-terminal stretch at 1 to 16 (MKWMVVVLLCLPLLEA) is a signal peptide. The propeptide at 17-65 (TQIKVPLKKIKSIREVLREKGLLGDFLKNHKPQHARKFFRNRLAKTGDF) is activation peptide. The region spanning 79–391 (YFGQISLGTP…DLANNRVGFA (313 aa)) is the Peptidase A1 domain. The active site involves D97. Disulfide bonds link C110–C115 and C273–C277. The active site involves T283. A disulfide bridge connects residues C316 and C349.

This sequence belongs to the peptidase A1 family.

Its subcellular location is the secreted. The enzyme catalyses More restricted specificity than pepsin A, but shows preferential cleavage at Tyr-|-Xaa bonds. High activity on hemoglobin.. Its function is as follows. Hydrolyzes a variety of proteins. This chain is Gastricsin (PGC), found in Cavia porcellus (Guinea pig).